Here is a 325-residue protein sequence, read N- to C-terminus: Phospho-N-acetylmuramoyl-pentapeptide-transferase (325 aa).

Transmembrane regions (helical) follow at residues 3–23 (LMIYSVLVAFVVSLIQGPILI), 48–68 (GTPTMGGVIFIISSVITVFVV), 79–99 (AIFAFVAFGIIGLIDDSLKII), 106–126 (LKAYQKMILLLIVSSIIGFYA), 136–156 (IIVPFVHKTWNLGMFYIPFII), 174–194 (GLATSITLLVMTFFAVVSYAT), 199–219 (LAVFCSIVAGALLGFLKYNAY), 223–243 (VFMGDTGSLALGGVVGAVAMM), 246–266 (LPLIVIIVGGIYLAEALSVIL), and 298–318 (IVSIFSIITVILCLIGFLSLI).

The protein belongs to the glycosyltransferase 4 family. MraY subfamily. The cofactor is Mg(2+).

Its subcellular location is the cell membrane. The enzyme catalyses UDP-N-acetyl-alpha-D-muramoyl-L-alanyl-gamma-D-glutamyl-meso-2,6-diaminopimeloyl-D-alanyl-D-alanine + di-trans,octa-cis-undecaprenyl phosphate = di-trans,octa-cis-undecaprenyl diphospho-N-acetyl-alpha-D-muramoyl-L-alanyl-D-glutamyl-meso-2,6-diaminopimeloyl-D-alanyl-D-alanine + UMP. It functions in the pathway cell wall biogenesis; peptidoglycan biosynthesis. Functionally, catalyzes the initial step of the lipid cycle reactions in the biosynthesis of the cell wall peptidoglycan: transfers peptidoglycan precursor phospho-MurNAc-pentapeptide from UDP-MurNAc-pentapeptide onto the lipid carrier undecaprenyl phosphate, yielding undecaprenyl-pyrophosphoryl-MurNAc-pentapeptide, known as lipid I. In Clostridium novyi (strain NT), this protein is Phospho-N-acetylmuramoyl-pentapeptide-transferase.